The primary structure comprises 66 residues: Cytoplasmic envelopment protein 3 (66 aa).

G2 carries N-myristoyl glycine; by host lipidation.

The protein belongs to the herpesviridae cytoplasmic envelopment protein 3 family. As to quaternary structure, interacts with cytoplasmic envelopment protein 2; this interaction is essential for the proper localization of each protein to the assembly complex and thus for the production of infectious virus. Phosphorylated. Phosphorylation does not seem to be required for recycling to the host Golgi apparatus. Packaging is selective for underphosphorylated forms.

It localises to the virion tegument. Its subcellular location is the virion membrane. The protein localises to the host cell membrane. The protein resides in the host Golgi apparatus membrane. Plays an important role in the cytoplasmic envelopment of tegument proteins and capsids during the assembly and egress processes. Also participates in viral entry at the fusion step probably by regulating the core fusion machinery. The polypeptide is Cytoplasmic envelopment protein 3 (38) (Saimiriine herpesvirus 2 (strain 11) (SaHV-2)).